We begin with the raw amino-acid sequence, 147 residues long: Large ribosomal subunit protein uL13 (147 aa).

The interval 126–147 is disordered; it reads GGPEHPHAAQNPQPYEITQIAQ.

Belongs to the universal ribosomal protein uL13 family. As to quaternary structure, part of the 50S ribosomal subunit.

In terms of biological role, this protein is one of the early assembly proteins of the 50S ribosomal subunit, although it is not seen to bind rRNA by itself. It is important during the early stages of 50S assembly. This chain is Large ribosomal subunit protein uL13, found in Cutibacterium acnes (strain DSM 16379 / KPA171202) (Propionibacterium acnes).